The chain runs to 97 residues: Putative ankyrin repeat protein RBE_0357 (97 aa).

The stretch at 24-54 (YGKTALHYAYTKRNIDIIKILLKCPGIKICI) is one ANK repeat.

The chain is Putative ankyrin repeat protein RBE_0357 from Rickettsia bellii (strain RML369-C).